Here is a 236-residue protein sequence, read N- to C-terminus: Probable 6-phosphogluconolactonase (236 aa).

The protein belongs to the glucosamine/galactosamine-6-phosphate isomerase family. 6-phosphogluconolactonase subfamily.

The catalysed reaction is 6-phospho-D-glucono-1,5-lactone + H2O = 6-phospho-D-gluconate + H(+). It participates in carbohydrate degradation; pentose phosphate pathway; D-ribulose 5-phosphate from D-glucose 6-phosphate (oxidative stage): step 2/3. Hydrolysis of 6-phosphogluconolactone to 6-phosphogluconate. This is Probable 6-phosphogluconolactonase (pgl) from Dictyostelium discoideum (Social amoeba).